The chain runs to 106 residues: ATP-dependent Clp protease adapter protein ClpS (106 aa).

This sequence belongs to the ClpS family. In terms of assembly, binds to the N-terminal domain of the chaperone ClpA.

Its function is as follows. Involved in the modulation of the specificity of the ClpAP-mediated ATP-dependent protein degradation. The sequence is that of ATP-dependent Clp protease adapter protein ClpS from Edwardsiella ictaluri (strain 93-146).